A 1258-amino-acid chain; its full sequence is Phospholipid-transporting ATPase C887.12 (1258 aa).

Disordered regions lie at residues 1-41 and 53-83; these read MARD…LGED and YISSSGQNSTNPFLADTRIENSPLGSESKAN. Residues 1–183 lie on the Cytoplasmic side of the membrane; that stretch reads MARDVDNKQN…PKFLKEQFSK (183 aa). A compositionally biased stretch (polar residues) spans 53-64; that stretch reads YISSSGQNSTNP. A helical transmembrane segment spans residues 184–204; sequence YANLFFLFTAVVQQIPGITPV. Residues 205-208 are Lumenal-facing; the sequence is NRYT. A helical transmembrane segment spans residues 209–229; it reads TIGPMLIVLSVSGIKEIMEDI. The Cytoplasmic portion of the chain corresponds to 230-406; the sequence is KRKKQDQELN…TSVEKQVNSQ (177 aa). Residues 407-427 traverse the membrane as a helical segment; the sequence is ILFLLCIFVFLCFASSLGALI. At 428-451 the chain is on the lumenal side; that stretch reads HRSVYGSALSYVKYTSNRAGMFFK. Residues 452-472 form a helical membrane-spanning segment; it reads GLLTFWILYSNLVPISLFVTF. The Cytoplasmic segment spans residues 473-974; it reads ELVRYIQAQL…KLILYSFYKN (502 aa). The active-site 4-aspartylphosphate intermediate is the aspartate 518. ATP is bound by residues aspartate 518, lysine 519, threonine 520, glutamate 613, phenylalanine 654, serine 656, lysine 659, lysine 677, arginine 710, threonine 711, threonine 790, glycine 791, aspartate 792, arginine 883, and lysine 889. Aspartate 518 contacts Mg(2+). Threonine 520 serves as a coordination point for Mg(2+). Aspartate 909 is a Mg(2+) binding site. 2 residues coordinate ATP: asparagine 912 and aspartate 913. Aspartate 913 serves as a coordination point for Mg(2+). The helical transmembrane segment at 975–995 threads the bilayer; it reads IALYMTQFWYAFCNAFSGQVI. The Lumenal portion of the chain corresponds to 996–998; that stretch reads FES. Residues 999-1019 form a helical membrane-spanning segment; that stretch reads WSISLYNVLFTVLPPVVIGIF. The Cytoplasmic portion of the chain corresponds to 1020-1051; sequence DQFVSAGQLFQYPQLYQLGQRSEFFNLKRFWS. Residues 1052-1072 form a helical membrane-spanning segment; that stretch reads WITNGFYHSLLLFLCSIAVFY. Topologically, residues 1073 to 1086 are lumenal; it reads YDGPNKDGLASGHW. The chain crosses the membrane as a helical span at residues 1087 to 1107; that stretch reads VWGTTLYAAILATVLGKAALI. Lysine 1103 is a binding site for a 1,2-diacyl-sn-glycero-3-phospho-(1D-myo-inositol 4-phosphate). Over 1108–1115 the chain is Cytoplasmic; that stretch reads SNHWTQYT. The chain crosses the membrane as a helical span at residues 1116-1136; it reads VIATLGSFLLWIVFMPIYAVA. The Lumenal portion of the chain corresponds to 1137-1148; it reads APAIGFSKEYYG. A helical membrane pass occupies residues 1149–1169; that stretch reads IIPHLYGNLKFWASLLVLPTI. Over 1170–1258 the chain is Cytoplasmic; the sequence is ALMRDFVWKY…HTRGAYGEMR (89 aa). Residues arginine 1173, tryptophan 1177, lysine 1178, tyrosine 1189, and histidine 1190 each coordinate a 1,2-diacyl-sn-glycero-3-phospho-(1D-myo-inositol 4-phosphate).

Belongs to the cation transport ATPase (P-type) (TC 3.A.3) family. Type IV subfamily. It depends on Mg(2+) as a cofactor.

The protein localises to the endoplasmic reticulum membrane. It localises to the golgi apparatus. Its subcellular location is the trans-Golgi network membrane. The catalysed reaction is ATP + H2O + phospholipidSide 1 = ADP + phosphate + phospholipidSide 2.. The enzyme catalyses a 1,2-diacyl-sn-glycero-3-phospho-L-serine(out) + ATP + H2O = a 1,2-diacyl-sn-glycero-3-phospho-L-serine(in) + ADP + phosphate + H(+). It carries out the reaction a 1,2-diacyl-sn-glycero-3-phosphoethanolamine(out) + ATP + H2O = a 1,2-diacyl-sn-glycero-3-phosphoethanolamine(in) + ADP + phosphate + H(+). In terms of biological role, catalytic component of a P4-ATPase flippase complex which catalyzes the hydrolysis of ATP coupled to the transport of phosphatidylserine and small amounts of ethanolamine from the lumen to the cytosolic leaflet of the trans-Golgi network and ensures the maintenance of asymmetric distribution of phospholipids. The protein is Phospholipid-transporting ATPase C887.12 of Schizosaccharomyces pombe (strain 972 / ATCC 24843) (Fission yeast).